The sequence spans 396 residues: Phosphopentomutase (396 aa).

Mn(2+)-binding residues include D13, D288, H293, D329, H330, and H341.

Belongs to the phosphopentomutase family. It depends on Mn(2+) as a cofactor.

It is found in the cytoplasm. The enzyme catalyses 2-deoxy-alpha-D-ribose 1-phosphate = 2-deoxy-D-ribose 5-phosphate. It catalyses the reaction alpha-D-ribose 1-phosphate = D-ribose 5-phosphate. It participates in carbohydrate degradation; 2-deoxy-D-ribose 1-phosphate degradation; D-glyceraldehyde 3-phosphate and acetaldehyde from 2-deoxy-alpha-D-ribose 1-phosphate: step 1/2. Functionally, isomerase that catalyzes the conversion of deoxy-ribose 1-phosphate (dRib-1-P) and ribose 1-phosphate (Rib-1-P) to deoxy-ribose 5-phosphate (dRib-5-P) and ribose 5-phosphate (Rib-5-P), respectively. This is Phosphopentomutase from Clostridium perfringens (strain SM101 / Type A).